The chain runs to 392 residues: uncharacterized protein (392 aa).

Belongs to the hcp1 family.

This is an uncharacterized protein from Escherichia coli (strain K12).